The sequence spans 99 residues: Small ribosomal subunit protein eS24 (99 aa).

The protein belongs to the eukaryotic ribosomal protein eS24 family.

The protein is Small ribosomal subunit protein eS24 (rps2e) of Thermoplasma volcanium (strain ATCC 51530 / DSM 4299 / JCM 9571 / NBRC 15438 / GSS1).